Consider the following 447-residue polypeptide: Probable alpha-galactosidase B (447 aa).

An N-terminal signal peptide occupies residues 1–25 (MTTFFSLTTAAAVLTLARGSNALVR). Disulfide bonds link Cys45–Cys77 and Cys127–Cys157. Asp155 functions as the Nucleophile in the catalytic mechanism. 2 N-linked (GlcNAc...) asparagine glycosylation sites follow: Asn162 and Asn180. 225–229 (EWGQA) is a binding site for substrate. Asn236 carries an N-linked (GlcNAc...) asparagine glycan. The active-site Proton donor is the Asp247. Residue Asn286 is glycosylated (N-linked (GlcNAc...) asparagine).

The protein belongs to the glycosyl hydrolase 27 family.

It is found in the secreted. It catalyses the reaction Hydrolysis of terminal, non-reducing alpha-D-galactose residues in alpha-D-galactosides, including galactose oligosaccharides, galactomannans and galactolipids.. Functionally, hydrolyzes a variety of simple alpha-D-galactoside as well as more complex molecules such as oligosaccharides and polysaccharides. This Aspergillus fumigatus (strain ATCC MYA-4609 / CBS 101355 / FGSC A1100 / Af293) (Neosartorya fumigata) protein is Probable alpha-galactosidase B (aglB).